We begin with the raw amino-acid sequence, 90 residues long: Protein A54 (90 aa).

The polypeptide is Protein A54 (Homo sapiens (Human)).